The primary structure comprises 480 residues: Protein DETOXIFICATION 15 (480 aa).

The next 12 membrane-spanning stretches (helical) occupy residues 36 to 56 (GPLI…VMFV), 69 to 89 (IATS…ASAM), 118 to 138 (LLSV…VFFG), 143 to 163 (IAHL…AYGL), 180 to 200 (VVIC…VLVL), 208 to 228 (GAAV…SCYV), 255 to 275 (LVIP…ELLV), 294 to 314 (VWMI…NELG), 326 to 346 (RVVL…LILI), 360 to 380 (VVSH…LDSF), 396 to 416 (IGAF…GLLL), and 428 to 448 (WLGI…ITFF).

The protein belongs to the multi antimicrobial extrusion (MATE) (TC 2.A.66.1) family.

The protein localises to the membrane. The polypeptide is Protein DETOXIFICATION 15 (Arabidopsis thaliana (Mouse-ear cress)).